A 595-amino-acid polypeptide reads, in one-letter code: Elongation factor 4 (595 aa).

One can recognise a tr-type G domain in the interval K2–K183. GTP-binding positions include D14 to T19 and N130 to D133.

Belongs to the TRAFAC class translation factor GTPase superfamily. Classic translation factor GTPase family. LepA subfamily.

The protein localises to the cell inner membrane. The catalysed reaction is GTP + H2O = GDP + phosphate + H(+). Functionally, required for accurate and efficient protein synthesis under certain stress conditions. May act as a fidelity factor of the translation reaction, by catalyzing a one-codon backward translocation of tRNAs on improperly translocated ribosomes. Back-translocation proceeds from a post-translocation (POST) complex to a pre-translocation (PRE) complex, thus giving elongation factor G a second chance to translocate the tRNAs correctly. Binds to ribosomes in a GTP-dependent manner. In Parabacteroides distasonis (strain ATCC 8503 / DSM 20701 / CIP 104284 / JCM 5825 / NCTC 11152), this protein is Elongation factor 4.